The following is a 637-amino-acid chain: CD2-associated protein (637 aa).

Residues 1–59 (MVDYIVEYDYDAVHDDELTIRVGEIIRNVKKLQEEGWLEGELNGRRGMFPDNFVKEIKR) enclose the SH3 1; truncated domain. Positions 1 to 175 (MVDYIVEYDY…ESTEDGETHN (175 aa)) are interaction with ANLN and localization to the midbody. A Glycyl lysine isopeptide (Lys-Gly) (interchain with G-Cter in SUMO2) cross-link involves residue Lys58. Ser80 and Ser86 each carry phosphoserine. Residues 108-167 (TKKRQCKVLFDYSPQNEDELELIVGDVIDVIEEVEEGWWSGTLNNKLGLFPSNFVKELES) enclose the SH3 2 domain. Positions 166–177 (ESTEDGETHNAQ) are enriched in basic and acidic residues. Positions 166–209 (ESTEDGETHNAQEESEVPLTGPTSPLPSPGNGSEPAPGSVAQPK) are disordered. Residue Ser224 is modified to Phosphoserine. The interval 226–254 (KLRTRTSSSETEEKKTEKPLILQPLGSRT) is disordered. An SH3 3 domain is found at 269-330 (KAKEYCRTLF…PDNFAVQISE (62 aa)). The segment at 333 to 455 (KDFPKPKKPP…KLDPEQLPVR (123 aa)) is disordered. Short sequence motifs (SH3-binding) lie at residues 336–352 (PKPKKPPPPAKGPAPKP), 378–397 (KPSKPAAPQVPPKKPTAPTK), and 410–422 (PKRPEKPVPPPPP). The segment covering 341–351 (PPPPAKGPAPK) has biased composition (pro residues). The segment covering 356–379 (AAEKKAFPLKAEEKDEKSLLEQKP) has biased composition (basic and acidic residues). Over residues 437 to 449 (IDTEPVSKPKLDP) the composition is skewed to basic and acidic residues. Residues Ser458, Ser469, Ser510, and Ser514 each carry the phosphoserine modification. The interval 488-555 (HLTANRPKMP…SLSTPSSASK (68 aa)) is disordered. Positions 517 to 539 (KTLKLPKEDDSGNLKPLEFKKDA) are enriched in basic and acidic residues. Lys523 participates in a covalent cross-link: Glycyl lysine isopeptide (Lys-Gly) (interchain with G-Cter in SUMO2). The span at 540–555 (SYSSKSSLSTPSSASK) shows a compositional bias: low complexity. At Thr563 the chain carries Phosphothreonine. Positions 578 to 636 (RNSVDELRAQIIELLCIVDALKKDHGKELEKLRKELEEEKAMRSNLEVEIAKLKKAVLL) form a coiled coil. Phosphoserine is present on Ser580.

Homodimer. Interacts with F-actin, PKD2, NPHS1 and NPHS2. Interacts with WTIP. Interacts with DDN; interaction is direct. Interacts (via SH3 2 domain) with CBL (via phosphorylated C-terminus). Interacts with BCAR1/p130Cas (via SH3 domain). Interacts with MVB12A and ARHGAP17. Interacts with ANLN, CD2 and CBLB. Interacts with PDCD6IP and TSG101. Interacts with RIN3. Interacts directly with RET (inactive) and CBLC; upon RET activation by GDNF suggested to dissociate from RET as CBLC:CD2AP complex. Interacts with CGNL1 and SH3BP1; probably part of a complex at cell junctions. Interacts with CAPZA1. Phosphorylated on tyrosine residues; probably by c-Abl, Fyn and c-Src. In terms of tissue distribution, expressed in podocytes (at protein level).

It localises to the cytoplasm. The protein localises to the cytoskeleton. Its subcellular location is the cell projection. It is found in the ruffle. The protein resides in the cell junction. In terms of biological role, seems to act as an adapter protein between membrane proteins and the actin cytoskeleton. In collaboration with CBLC, modulates the rate of RET turnover and may act as regulatory checkpoint that limits the potency of GDNF on neuronal survival. Controls CBLC function, converting it from an inhibitor to a promoter of RET degradation. May play a role in receptor clustering and cytoskeletal polarity in the junction between T-cell and antigen-presenting cell. May anchor the podocyte slit diaphragm to the actin cytoskeleton in renal glomerolus. Also required for cytokinesis. Plays a role in epithelial cell junctions formation. This chain is CD2-associated protein (Cd2ap), found in Mus musculus (Mouse).